We begin with the raw amino-acid sequence, 73 residues long: NADH dehydrogenase [ubiquinone] 1 beta subcomplex subunit 3-B (73 aa).

A helical transmembrane segment spans residues 31–48 (ALPGLGIGVAAFCVYLVG).

Belongs to the complex I NDUFB3 subunit family. As to quaternary structure, complex I is composed of at least 49 different subunits.

The protein localises to the mitochondrion inner membrane. Its function is as follows. Accessory subunit of the mitochondrial membrane respiratory chain NADH dehydrogenase (Complex I), that is believed not to be involved in catalysis. Complex I functions in the transfer of electrons from NADH to the respiratory chain. The immediate electron acceptor for the enzyme is believed to be ubiquinone. In Arabidopsis thaliana (Mouse-ear cress), this protein is NADH dehydrogenase [ubiquinone] 1 beta subcomplex subunit 3-B.